A 484-amino-acid chain; its full sequence is Bifunctional protein GlmU (484 aa).

The tract at residues 1–240 is pyrophosphorylase; sequence MSASRPAAVM…RTEVEGVNDR (240 aa). Residues 12 to 15, Lys26, Gln79, and 84 to 85 contribute to the UDP-N-acetyl-alpha-D-glucosamine site; these read LAAG and GT. Position 113 (Asp113) interacts with Mg(2+). UDP-N-acetyl-alpha-D-glucosamine contacts are provided by Gly150, Glu165, Asn180, and Asn238. Asn238 is a binding site for Mg(2+). The interval 241 to 261 is linker; the sequence is VQLAEARRLLNARLLEQLMRD. The segment at 262–484 is N-acetyltransferase; it reads GVTVVDPAST…RARARSEEDR (223 aa). The UDP-N-acetyl-alpha-D-glucosamine site is built by Arg343 and Lys361. Residue His373 is the Proton acceptor of the active site. UDP-N-acetyl-alpha-D-glucosamine is bound by residues Tyr376 and Asn387. Acetyl-CoA-binding positions include Ala390, 396–397, Ser415, and Ala433; that span reads NY. The disordered stretch occupies residues 457–484; that stretch reads EGWVERKRPGTPAAQAAERARARSEEDR. The span at 474–484 shows a compositional bias: basic and acidic residues; it reads ERARARSEEDR.

The protein in the N-terminal section; belongs to the N-acetylglucosamine-1-phosphate uridyltransferase family. It in the C-terminal section; belongs to the transferase hexapeptide repeat family. As to quaternary structure, homotrimer. Mg(2+) serves as cofactor.

It localises to the cytoplasm. The catalysed reaction is alpha-D-glucosamine 1-phosphate + acetyl-CoA = N-acetyl-alpha-D-glucosamine 1-phosphate + CoA + H(+). It carries out the reaction N-acetyl-alpha-D-glucosamine 1-phosphate + UTP + H(+) = UDP-N-acetyl-alpha-D-glucosamine + diphosphate. It participates in nucleotide-sugar biosynthesis; UDP-N-acetyl-alpha-D-glucosamine biosynthesis; N-acetyl-alpha-D-glucosamine 1-phosphate from alpha-D-glucosamine 6-phosphate (route II): step 2/2. It functions in the pathway nucleotide-sugar biosynthesis; UDP-N-acetyl-alpha-D-glucosamine biosynthesis; UDP-N-acetyl-alpha-D-glucosamine from N-acetyl-alpha-D-glucosamine 1-phosphate: step 1/1. The protein operates within bacterial outer membrane biogenesis; LPS lipid A biosynthesis. In terms of biological role, catalyzes the last two sequential reactions in the de novo biosynthetic pathway for UDP-N-acetylglucosamine (UDP-GlcNAc). The C-terminal domain catalyzes the transfer of acetyl group from acetyl coenzyme A to glucosamine-1-phosphate (GlcN-1-P) to produce N-acetylglucosamine-1-phosphate (GlcNAc-1-P), which is converted into UDP-GlcNAc by the transfer of uridine 5-monophosphate (from uridine 5-triphosphate), a reaction catalyzed by the N-terminal domain. This is Bifunctional protein GlmU from Thermobifida fusca (strain YX).